We begin with the raw amino-acid sequence, 92 residues long: UPF0223 protein SGO_1052 (92 aa).

This sequence belongs to the UPF0223 family.

The sequence is that of UPF0223 protein SGO_1052 from Streptococcus gordonii (strain Challis / ATCC 35105 / BCRC 15272 / CH1 / DL1 / V288).